The primary structure comprises 99 residues: ATP-dependent Clp protease adapter protein ClpS (99 aa).

It belongs to the ClpS family. In terms of assembly, binds to the N-terminal domain of the chaperone ClpA.

Involved in the modulation of the specificity of the ClpAP-mediated ATP-dependent protein degradation. This chain is ATP-dependent Clp protease adapter protein ClpS, found in Helicobacter hepaticus (strain ATCC 51449 / 3B1).